Here is a 310-residue protein sequence, read N- to C-terminus: uncharacterized protein (310 aa).

5 consecutive transmembrane segments (helical) span residues 10–30, 44–64, 78–98, 113–133, and 161–181; these read AVLSIGAALATMGLKLGAYAI, TVNLASAIVAFWALSLAATPA, FSSGLEGAFIFVAALGIGYSA, LGIALAIAATALNGTVAWILW, and VVVAVALIFVTGWEWLDPLIA. A compositionally biased stretch (basic and acidic residues) spans 285–297; that stretch reads PLEDPKSWQHPDE. Positions 285–310 are disordered; the sequence is PLEDPKSWQHPDEFPPSAPLNRDKPN.

It belongs to the cation diffusion facilitator (CDF) transporter (TC 2.A.4) family.

The protein resides in the cell membrane. This is an uncharacterized protein from Synechocystis sp. (strain ATCC 27184 / PCC 6803 / Kazusa).